Consider the following 129-residue polypeptide: Small ribosomal subunit protein bS16m (129 aa).

Belongs to the bacterial ribosomal protein bS16 family. Component of the mitochondrial ribosome small subunit (28S) which comprises a 12S rRNA and about 30 distinct proteins.

The protein resides in the mitochondrion. The protein is Small ribosomal subunit protein bS16m (mRpS16) of Drosophila melanogaster (Fruit fly).